The sequence spans 292 residues: tRNA pseudouridine synthase B (292 aa).

Asp38 (nucleophile) is an active-site residue.

Belongs to the pseudouridine synthase TruB family. Type 1 subfamily.

It catalyses the reaction uridine(55) in tRNA = pseudouridine(55) in tRNA. Functionally, responsible for synthesis of pseudouridine from uracil-55 in the psi GC loop of transfer RNAs. In Streptococcus sanguinis (strain SK36), this protein is tRNA pseudouridine synthase B.